The chain runs to 435 residues: GTPase Obg (435 aa).

Residues 1 to 158 form the Obg domain; the sequence is MFIDRAKIYV…RWLYLELKLL (158 aa). An OBG-type G domain is found at 159 to 328; that stretch reads ADVGLVGLPN…LLELMEKYVR (170 aa). GTP-binding positions include 165 to 172, 190 to 194, 211 to 214, 280 to 283, and 309 to 311; these read GLPNAGKS, FTTKT, DIPG, NKID, and SAK. Residues serine 172 and threonine 192 each coordinate Mg(2+). The OCT domain occupies 343-426; the sequence is IQETKEGRVE…IGDYIFKYNA (84 aa).

It belongs to the TRAFAC class OBG-HflX-like GTPase superfamily. OBG GTPase family. As to quaternary structure, monomer. Requires Mg(2+) as cofactor.

It localises to the cytoplasm. An essential GTPase which binds GTP, GDP and possibly (p)ppGpp with moderate affinity, with high nucleotide exchange rates and a fairly low GTP hydrolysis rate. Plays a role in control of the cell cycle, stress response, ribosome biogenesis and in those bacteria that undergo differentiation, in morphogenesis control. The protein is GTPase Obg of Dictyoglomus thermophilum (strain ATCC 35947 / DSM 3960 / H-6-12).